A 607-amino-acid polypeptide reads, in one-letter code: Elongation factor 4 (607 aa).

The region spanning 11–193 is the tr-type G domain; sequence SRIRNFSIIA…QVVEKVPAPA (183 aa). GTP is bound by residues 23 to 28 and 140 to 143; these read DHGKST and NKID.

The protein belongs to the TRAFAC class translation factor GTPase superfamily. Classic translation factor GTPase family. LepA subfamily.

It localises to the cell membrane. It carries out the reaction GTP + H2O = GDP + phosphate + H(+). Functionally, required for accurate and efficient protein synthesis under certain stress conditions. May act as a fidelity factor of the translation reaction, by catalyzing a one-codon backward translocation of tRNAs on improperly translocated ribosomes. Back-translocation proceeds from a post-translocation (POST) complex to a pre-translocation (PRE) complex, thus giving elongation factor G a second chance to translocate the tRNAs correctly. Binds to ribosomes in a GTP-dependent manner. The polypeptide is Elongation factor 4 (Shouchella clausii (strain KSM-K16) (Alkalihalobacillus clausii)).